Here is a 39-residue protein sequence, read N- to C-terminus: B melanoma antigen 4 (39 aa).

Positions 1–17 are cleaved as a signal peptide; it reads MAAGAVFLALSAQLLQA.

It belongs to the BAGE family. In terms of tissue distribution, not expressed in normal tissues except in testis. Expressed in melanoma, bladder and lung carcinomas.

Its subcellular location is the secreted. Its function is as follows. Unknown. Candidate gene encoding tumor antigens. This is B melanoma antigen 4 (BAGE4) from Homo sapiens (Human).